The sequence spans 475 residues: Ankyrin repeat, SAM and basic leucine zipper domain-containing protein 1 (475 aa).

The interval 1-24 (MAAGPLRGLAVAGGGESSESEDDG) is disordered. Residues serine 17, serine 18, and serine 20 each carry the phosphoserine modification. ANK repeat units lie at residues 45 to 74 (ERQE…SVDT), 78 to 107 (YGWT…NASF), 110 to 144 (DKQT…DPNV), 148 to 177 (RLMT…EVNT), 181 to 210 (NGYT…NKMI), and 214 to 243 (DGKT…PLEG). The region spanning 272-334 (SYTAFGDLEI…KIMAALKELE (63 aa)) is the SAM domain.

In terms of assembly, interacts with DDX4, PIWIL1, RANBP9 and TDRD1.

The protein resides in the cytoplasm. Its function is as follows. Plays a central role during spermatogenesis by repressing transposable elements and preventing their mobilization, which is essential for the germline integrity. Acts via the piRNA metabolic process, which mediates the repression of transposable elements during meiosis by forming complexes composed of piRNAs and Piwi proteins and governs the methylation and subsequent repression of transposons. Its association with pi-bodies suggests a participation in the primary piRNAs metabolic process. Required prior to the pachytene stage to facilitate the production of multiple types of piRNAs, including those associated with repeats involved in the regulation of retrotransposons. May act by mediating protein-protein interactions during germ cell maturation. This chain is Ankyrin repeat, SAM and basic leucine zipper domain-containing protein 1 (ASZ1), found in Ovis aries (Sheep).